The chain runs to 465 residues: Protein hedgehog (465 aa).

Cysteine 79 carries N-palmitoyl cysteine lipidation. Ca(2+) contacts are provided by glutamate 143, glutamate 144, aspartate 149, threonine 179, glutamate 180, aspartate 183, and aspartate 185. Glycine 251 is lipidated: Cholesterol glycine ester.

It belongs to the hedgehog family. Interacts with shf. Post-translationally, the C-terminal part of the hedgehog protein precursor displays an autoproteolysis activity that results in the cleavage of the full-length protein into two parts (N-product and C-product). In addition, the C-terminal part displays a cholesterol transferase activity that results by the covalent attachment of a cholesterol moiety to the C-terminal of the newly generated N-product. The N-product is the active species in both local and long-range signaling, whereas the C-product has no signaling activity. Cholesterylation is required for N-product targeting to lipid rafts and multimerization. In terms of processing, N-palmitoylation by Rasp of the hedgehog N-product, within the secretory pathway, is required for the embryonic and larval patterning activities of the hedgehog signal.

It localises to the nucleus. Its subcellular location is the cytoplasm. It is found in the cell membrane. It carries out the reaction glycyl-L-cysteinyl-[protein] + cholesterol + H(+) = [protein]-C-terminal glycyl cholesterol ester + N-terminal L-cysteinyl-[protein]. Functionally, the C-terminal part of the hedgehog protein precursor displays an autoproteolysis activity that results in the cleavage of the full-length protein into two parts (N-product and C-product). In addition, the C-terminal part displays a cholesterol transferase activity that results by the covalent attachment of a cholesterol moiety to the C-terminal of the newly generated N-product. Once cleaved, the C-product has no signaling activity and diffuses from the cell. In terms of biological role, the dually lipidated hedgehog protein N-product is a morphogen which is essential for a variety of patterning events during development. Establishes the anterior-posterior axis of the embryonic segments and patterns the larval imaginal disks. Binds to the patched (ptc) receptor, which functions in association with smoothened (smo), to activate the transcription of target genes wingless (wg), decapentaplegic (dpp) and ptc. In the absence of hh, ptc represses the constitutive signaling activity of smo through fused (fu). Essential component of a signaling pathway which regulates the Duox-dependent gut immune response to bacterial uracil; required to activate Cad99C-dependent endosome formation, norpA-dependent Ca2+ mobilization and p38 MAPK, which are essential steps in the Duox-dependent production of reactive oxygen species (ROS) in response to intestinal bacterial infection. During photoreceptor differentiation, it up-regulates transcription of Ubr3, which in turn promotes the hh-signaling pathway by mediating the ubiquitination and degradation of cos. The polypeptide is Protein hedgehog (Drosophila sechellia (Fruit fly)).